A 121-amino-acid polypeptide reads, in one-letter code: Small ribosomal subunit protein uS10 (121 aa).

A disordered region spans residues 1 to 20 (MTEQKAKSSKTSSEEAKKQK).

The protein belongs to the universal ribosomal protein uS10 family. Part of the 30S ribosomal subunit.

In terms of biological role, involved in the binding of tRNA to the ribosomes. This is Small ribosomal subunit protein uS10 from Mycoplasmoides gallisepticum (strain R(low / passage 15 / clone 2)) (Mycoplasma gallisepticum).